The chain runs to 214 residues: ATP-dependent Clp protease proteolytic subunit (214 aa).

Serine 113 serves as the catalytic Nucleophile. Residue histidine 138 is part of the active site.

This sequence belongs to the peptidase S14 family. In terms of assembly, fourteen ClpP subunits assemble into 2 heptameric rings which stack back to back to give a disk-like structure with a central cavity, resembling the structure of eukaryotic proteasomes.

The protein resides in the cytoplasm. It carries out the reaction Hydrolysis of proteins to small peptides in the presence of ATP and magnesium. alpha-casein is the usual test substrate. In the absence of ATP, only oligopeptides shorter than five residues are hydrolyzed (such as succinyl-Leu-Tyr-|-NHMec, and Leu-Tyr-Leu-|-Tyr-Trp, in which cleavage of the -Tyr-|-Leu- and -Tyr-|-Trp bonds also occurs).. In terms of biological role, cleaves peptides in various proteins in a process that requires ATP hydrolysis. Has a chymotrypsin-like activity. Plays a major role in the degradation of misfolded proteins. This is ATP-dependent Clp protease proteolytic subunit from Alkalilimnicola ehrlichii (strain ATCC BAA-1101 / DSM 17681 / MLHE-1).